The chain runs to 543 residues: Tyrosine-protein kinase Yes (543 aa).

Over residues 1–20 (MGCIKSKENKSPAIKYRPEN) the composition is skewed to basic and acidic residues. The disordered stretch occupies residues 1-45 (MGCIKSKENKSPAIKYRPENTPEPVSTSVSHYGAEPTTVSPCPSS). G2 carries the N-myristoyl glycine lipid modification. A lipid anchor (S-palmitoyl cysteine; in membrane form) is attached at C3. T21 is modified (phosphothreonine). Residue Y32 is modified to Phosphotyrosine. S40 carries the phosphoserine modification. The SH3 domain occupies 91 to 152 (GGVTIFVALY…PSNYVAPADS (62 aa)). The region spanning 158-255 (WYFGKMGRKD…GLCHKLTTVC (98 aa)) is the SH2 domain. Positions 277 to 530 (LRLEVKLGQG…YIQSFLEDYF (254 aa)) constitute a Protein kinase domain. ATP contacts are provided by residues 283 to 291 (LGQGCFGEV) and K305. Residues Y336 and Y345 each carry the phosphotyrosine modification. The active-site Proton acceptor is D396. Residue Y426 is modified to Phosphotyrosine; by autocatalysis. Y446 carries the phosphotyrosine modification. Position 537 is a phosphotyrosine; by CSK (Y537).

It belongs to the protein kinase superfamily. Tyr protein kinase family. SRC subfamily. Interacts with YAP1 and CSF1R. Interacts with CTNND1; this interaction allows YES1-mediated activation of FYN and FER and subsequent phosphorylation of CTNND1. Interacts with FASLG. Interacts with IL6ST/gp130. Interacts with SCRIB, when YES1 is in a closed conformation; the interaction facilitates YES1 autophosphorylation. Phosphorylated. Phosphorylation by CSK on the C-terminal tail maintains the enzyme in an inactive state. Autophosphorylation at Tyr-426 maintains enzyme activity by blocking CSK-mediated inhibition. Post-translationally, palmitoylation at Cys-3 promotes membrane localization. As to expression, expressed in the epithelial cells of renal proximal tubules and stomach as well as hematopoietic cells in the bone marrow and spleen in the fetal tissues. In adult, expressed in epithelial cells of the renal proximal tubules and present in keratinocytes in the basal epidermal layer of epidermis.

Its subcellular location is the cell membrane. The protein resides in the cytoplasm. It is found in the cytoskeleton. It localises to the microtubule organizing center. The protein localises to the centrosome. Its subcellular location is the cytosol. The protein resides in the cell junction. It carries out the reaction L-tyrosyl-[protein] + ATP = O-phospho-L-tyrosyl-[protein] + ADP + H(+). Non-receptor protein tyrosine kinase that is involved in the regulation of cell growth and survival, apoptosis, cell-cell adhesion, cytoskeleton remodeling, and differentiation. Stimulation by receptor tyrosine kinases (RTKs) including EGFR, PDGFR, CSF1R and FGFR leads to recruitment of YES1 to the phosphorylated receptor, and activation and phosphorylation of downstream substrates. Upon EGFR activation, promotes the phosphorylation of PARD3 to favor epithelial tight junction assembly. Participates in the phosphorylation of specific junctional components such as CTNND1 by stimulating the FYN and FER tyrosine kinases at cell-cell contacts. Upon T-cell stimulation by CXCL12, phosphorylates collapsin response mediator protein 2/DPYSL2 and induces T-cell migration. Participates in CD95L/FASLG signaling pathway and mediates AKT-mediated cell migration. Plays a role in cell cycle progression by phosphorylating the cyclin-dependent kinase 4/CDK4 thus regulating the G1 phase. Also involved in G2/M progression and cytokinesis. Catalyzes phosphorylation of organic cation transporter OCT2 which induces its transport activity. The sequence is that of Tyrosine-protein kinase Yes (YES1) from Homo sapiens (Human).